A 194-amino-acid polypeptide reads, in one-letter code: UPF0301 protein BT_0659 (194 aa).

It belongs to the UPF0301 (AlgH) family.

The chain is UPF0301 protein BT_0659 from Bartonella tribocorum (strain CIP 105476 / IBS 506).